The chain runs to 593 residues: Arylsulfatase D (593 aa).

The N-terminal stretch at M1–P33 is a signal peptide. Ca(2+)-binding residues include D49 and D50. N61 carries N-linked (GlcNAc...) asparagine glycosylation. C89 contacts Ca(2+). C89 acts as the Nucleophile in catalysis. The residue at position 89 (C89) is a 3-oxoalanine (Cys). An N-linked (GlcNAc...) asparagine glycan is attached at N128. K148 contributes to the substrate binding site. The active site involves H150. H304 contacts substrate. N347 is a glycosylation site (N-linked (GlcNAc...) asparagine). Residues D356 and H357 each coordinate Ca(2+). Residue K381 coordinates substrate.

Belongs to the sulfatase family. The cofactor is Ca(2+). The conversion to 3-oxoalanine (also known as C-formylglycine, FGly), of a serine or cysteine residue in prokaryotes and of a cysteine residue in eukaryotes, is critical for catalytic activity. As to expression, expressed in the pancreas, kidney, liver, lung, placenta, brain and heart.

It localises to the lysosome. The protein is Arylsulfatase D (ARSD) of Homo sapiens (Human).